Reading from the N-terminus, the 355-residue chain is Olfactory receptor 1I1 (355 aa).

Residues 1–25 (MEPEKQTEISEFFLQGLSEKPEHQT) lie on the Extracellular side of the membrane. A helical membrane pass occupies residues 26–49 (LLFTMFLSTYLVTIIGNALIILAI). Residues 50 to 57 (ITDSHLHT) are Cytoplasmic-facing. A helical membrane pass occupies residues 58–79 (PMYFFLFNLSLVDTLLSSTTVP). The Extracellular portion of the chain corresponds to 80–100 (KMLANIQAQSRAIPFVGCLTQ). A helical membrane pass occupies residues 101–120 (MYAFHLFGTMDSFLLAVMAI). The Cytoplasmic segment spans residues 121 to 139 (DRFVAIVHPQRYLVLMCSP). A helical membrane pass occupies residues 140-158 (VCGLLLGASWMITNLQSLI). The Extracellular portion of the chain corresponds to 159-195 (HTCLMAQLTFCAGSEISHFFCDLMPLLKLSGSDTHTN). Residues 196–219 (ELVIFAFGIVVGTSPFSCILLSYI) form a helical membrane-spanning segment. The Cytoplasmic portion of the chain corresponds to 220-236 (RIFWTVFKIPSTRGKWK). A helical transmembrane segment spans residues 237 to 259 (AFSTCGLHLTVVSLSYGTIFAVY). The Extracellular portion of the chain corresponds to 260 to 272 (LQPTSPSSSQKDK). A helical transmembrane segment spans residues 273–292 (AAALMCGVFIPMLNPFIYSI). At 293 to 355 (RNKDMKAALG…QSLAGNRDME (63 aa)) the chain is on the cytoplasmic side.

Belongs to the G-protein coupled receptor 1 family.

It is found in the cell membrane. In terms of biological role, odorant receptor. The chain is Olfactory receptor 1I1 (OR1I1) from Homo sapiens (Human).